The following is a 295-amino-acid chain: MDNKLDVFRRELVDVQGIPLFWSIAEQWSQVESFEARPDDILISTYPKSGTTWISEILDLIYNNGDAEKCKRDAIYRRVPFMELIIPGITNGVEMLNNMQSPRLVKTHLPVQLLPSSFWKNDCKMIYVARNAKDVAVSYYYFHQMAKMHPEPGTWEEFLEKFMAGQVSFGPWYDHVKGWWEKRKEYRILYLFYEDMKEDPKCEIQKVLKFLEKDIPEEVVNKILYHSSFSVMKANPSANYTTMMKEEMDQSVSPFMRKGISGDWKNQFTVAQYEKFEEDYVKKMEESTLKFRSEI.

48 to 53 (KSGTTW) contacts 3'-phosphoadenylyl sulfate. Substrate contacts are provided by residues phenylalanine 81 and 106–108 (KTH). Histidine 108 serves as the catalytic Proton acceptor. The 3'-phosphoadenylyl sulfate site is built by arginine 130 and serine 138. Residue phenylalanine 142 participates in substrate binding. Residues tyrosine 193, serine 227, and 257–259 (RKG) contribute to the 3'-phosphoadenylyl sulfate site.

This sequence belongs to the sulfotransferase 1 family.

It is found in the cytoplasm. In terms of biological role, sulfotransferase with broad substrate specificity that utilizes 3'-phospho-5'-adenylyl sulfate (PAPS) as sulfonate donor to catalyze the sulfate conjugation of catecholamines, such as dopamine, prostaglandins, leukotriene E4, drugs and xenobiotic compounds. Has sulfotransferase activity towards p-nitrophenol, 2-naphthylamine and minoxidil (in vitro). Sulfonation increases the water solubility of most compounds, and therefore their renal excretion, but it can also result in bioactivation to form active metabolites. In Rattus norvegicus (Rat), this protein is Sulfotransferase 1 family member D1 (Sult1d1).